Here is a 259-residue protein sequence, read N- to C-terminus: Phosphate import ATP-binding protein PstB (259 aa).

In terms of domain architecture, ABC transporter spans 2–248 (GQRIDVNHEN…ITMFNNPQNE (247 aa)). Residue 37–44 (GPSGCGKS) participates in ATP binding.

The protein belongs to the ABC transporter superfamily. Phosphate importer (TC 3.A.1.7) family. As to quaternary structure, the complex is composed of two ATP-binding proteins (PstB), two transmembrane proteins (PstC and PstA) and a solute-binding protein (PstS).

The protein resides in the cell membrane. It carries out the reaction phosphate(out) + ATP + H2O = ADP + 2 phosphate(in) + H(+). Part of the ABC transporter complex PstSACB involved in phosphate import. Responsible for energy coupling to the transport system. This chain is Phosphate import ATP-binding protein PstB, found in Bifidobacterium longum (strain NCC 2705).